We begin with the raw amino-acid sequence, 176 residues long: ATP-dependent protease subunit HslV (176 aa).

Thr-2 is a catalytic residue. The Na(+) site is built by Gly-157, Cys-160, and Thr-163.

Belongs to the peptidase T1B family. HslV subfamily. A double ring-shaped homohexamer of HslV is capped on each side by a ring-shaped HslU homohexamer. The assembly of the HslU/HslV complex is dependent on binding of ATP.

It localises to the cytoplasm. It catalyses the reaction ATP-dependent cleavage of peptide bonds with broad specificity.. Its activity is regulated as follows. Allosterically activated by HslU binding. Protease subunit of a proteasome-like degradation complex believed to be a general protein degrading machinery. The sequence is that of ATP-dependent protease subunit HslV from Pseudomonas fluorescens (strain ATCC BAA-477 / NRRL B-23932 / Pf-5).